We begin with the raw amino-acid sequence, 504 residues long: Maturase K (504 aa).

This sequence belongs to the intron maturase 2 family. MatK subfamily.

Its subcellular location is the plastid. The protein resides in the chloroplast. Usually encoded in the trnK tRNA gene intron. Probably assists in splicing its own and other chloroplast group II introns. The sequence is that of Maturase K from Cynophalla hastata (Broadleaf caper).